The sequence spans 86 residues: Large ribosomal subunit protein bL35m (86 aa).

The transit peptide at 1-18 directs the protein to the mitochondrion; that stretch reads MLVVFQRVVRATVLVGRK. Residues 45–69 form a disordered region; that stretch reads RKHAGAQHLNRDTSSSTRARQRQWE.

Belongs to the bacterial ribosomal protein bL35 family. As to quaternary structure, component of the mitochondrial large ribosomal subunit (mt-LSU). Mature yeast 74S mitochondrial ribosomes consist of a small (37S) and a large (54S) subunit. The 37S small subunit contains a 15S ribosomal RNA (15S mt-rRNA) and at least 32 different proteins. The 54S large subunit contains a 21S rRNA (21S mt-rRNA) and at least 45 different proteins.

It is found in the mitochondrion. In terms of biological role, component of the mitochondrial ribosome (mitoribosome), a dedicated translation machinery responsible for the synthesis of mitochondrial genome-encoded proteins, including at least some of the essential transmembrane subunits of the mitochondrial respiratory chain. The mitoribosomes are attached to the mitochondrial inner membrane and translation products are cotranslationally integrated into the membrane. The polypeptide is Large ribosomal subunit protein bL35m (new15) (Schizosaccharomyces pombe (strain 972 / ATCC 24843) (Fission yeast)).